Consider the following 179-residue polypeptide: Large ribosomal subunit protein uL6 (179 aa).

Belongs to the universal ribosomal protein uL6 family. Part of the 50S ribosomal subunit.

In terms of biological role, this protein binds to the 23S rRNA, and is important in its secondary structure. It is located near the subunit interface in the base of the L7/L12 stalk, and near the tRNA binding site of the peptidyltransferase center. The chain is Large ribosomal subunit protein uL6 from Synechococcus elongatus (strain ATCC 33912 / PCC 7942 / FACHB-805) (Anacystis nidulans R2).